The primary structure comprises 365 residues: DNA replication and repair protein RecF (365 aa).

An ATP-binding site is contributed by 30-37; sequence GANGQGKT.

It belongs to the RecF family.

The protein resides in the cytoplasm. The RecF protein is involved in DNA metabolism; it is required for DNA replication and normal SOS inducibility. RecF binds preferentially to single-stranded, linear DNA. It also seems to bind ATP. This chain is DNA replication and repair protein RecF, found in Geobacter sulfurreducens (strain ATCC 51573 / DSM 12127 / PCA).